The following is a 1225-amino-acid chain: Hybrid signal transduction histidine kinase C (1225 aa).

A helical transmembrane segment spans residues 8–28 (GFLLSTLFFTIISIILFYFFI). A compositionally biased stretch (low complexity) spans 313–356 (LSPRSLSSSSSSSPSSSNNNGNTNNSGSLSPRSSNSNGSAVSPR). Residues 313-407 (LSPRSLSSSS…SNGTISSPRT (95 aa)) form a disordered region. The segment covering 357-368 (NVSSNSMSPRGQ) has biased composition (polar residues). A compositionally biased stretch (low complexity) spans 370 to 388 (SDRSISSPRGSSSSSSSSS). Residues 389–407 (NELAISPRNSNGTISSPRT) show a composition bias toward polar residues. The region spanning 426–653 (HLSHELRTPI…TFHFVIPLET (228 aa)) is the Histidine kinase domain. His-429 is subject to Phosphohistidine; by autocatalysis. The region spanning 669–784 (SVLVVDKNPY…HLVACLLASM (116 aa)) is the Response regulatory 1 domain. At Asp-721 the chain carries 4-aspartylphosphate. Disordered stretches follow at residues 809 to 832 (NNIN…SVYG), 941 to 974 (DDDS…DELN), and 1021 to 1076 (YLSP…PRAP). The segment covering 945–954 (NNYCNTTGTM) has biased composition (polar residues). Over residues 1023–1037 (SPRSMNNNNGNNDNG) the composition is skewed to low complexity. Positions 1058–1072 (TSDTSSLAQSPNSLS) are enriched in polar residues. Residues 1078 to 1200 (KIMILDDNPV…CLELILRKWE (123 aa)) enclose the Response regulatory 2 domain. At Asp-1127 the chain carries 4-aspartylphosphate.

It is found in the membrane. The catalysed reaction is ATP + protein L-histidine = ADP + protein N-phospho-L-histidine.. Acts in a signal transduction pathway that regulates the slug versus culmination choice. Believed to be the first component of a phosphorelay that couples the sensing of ammonia to the modulation of PKA activity and hence activates culmination and spore germination. Ammonium transporters amtA and amtC are thought to respectively activate and inhibit dhkC phosphorelay. This protein probably undergoes an ATP-dependent autophosphorylation at conserved His residue in the kinase core, and a phosphoryl group is then transferred to a conserved aspartate residue in the receiver domain. In Dictyostelium discoideum (Social amoeba), this protein is Hybrid signal transduction histidine kinase C (dhkC).